A 227-amino-acid chain; its full sequence is MKFAVIVFPGSNCDVDMFHAIKDELGEEVDYVWHDTENLDEYDAILLPGGFSYGDYLRCGAISRFANAMKAVQKAAEQGKPILGVCNGFQILVESGLLPGALMRNENLKFMCRTVQLRVENNETMFTSQYEKDEIINIPIAHGEGNYYCDEETLKQLEENNQIAFRYVENPNGSVSDIAGIVNEKGNVLGMMPHPERAVDELLGGAEGLKVFQSILKQWRETYVVNA.

The Glutamine amidotransferase type-1 domain maps to 3–225 (FAVIVFPGSN…LKQWRETYVV (223 aa)). Cys86 functions as the Nucleophile in the catalytic mechanism. Active-site residues include His194 and Glu196.

As to quaternary structure, part of the FGAM synthase complex composed of 1 PurL, 1 PurQ and 2 PurS subunits.

Its subcellular location is the cytoplasm. The enzyme catalyses N(2)-formyl-N(1)-(5-phospho-beta-D-ribosyl)glycinamide + L-glutamine + ATP + H2O = 2-formamido-N(1)-(5-O-phospho-beta-D-ribosyl)acetamidine + L-glutamate + ADP + phosphate + H(+). The catalysed reaction is L-glutamine + H2O = L-glutamate + NH4(+). It functions in the pathway purine metabolism; IMP biosynthesis via de novo pathway; 5-amino-1-(5-phospho-D-ribosyl)imidazole from N(2)-formyl-N(1)-(5-phospho-D-ribosyl)glycinamide: step 1/2. Functionally, part of the phosphoribosylformylglycinamidine synthase complex involved in the purines biosynthetic pathway. Catalyzes the ATP-dependent conversion of formylglycinamide ribonucleotide (FGAR) and glutamine to yield formylglycinamidine ribonucleotide (FGAM) and glutamate. The FGAM synthase complex is composed of three subunits. PurQ produces an ammonia molecule by converting glutamine to glutamate. PurL transfers the ammonia molecule to FGAR to form FGAM in an ATP-dependent manner. PurS interacts with PurQ and PurL and is thought to assist in the transfer of the ammonia molecule from PurQ to PurL. This Bacillus thuringiensis (strain Al Hakam) protein is Phosphoribosylformylglycinamidine synthase subunit PurQ.